The primary structure comprises 424 residues: MFS-type transporter opdF (424 aa).

The segment covering 1 to 10 (MSDTSLEKGN) has biased composition (basic and acidic residues). Residues 1–23 (MSDTSLEKGNEGPTAEAPKVAPP) are disordered. Helical transmembrane passes span 36–56 (VAGA…IALF), 102–122 (VPIA…SLST), 127–147 (LMLS…TPAM), 160–180 (IVGG…PLMV), and 187–207 (VGFG…LVFA). A glycan (N-linked (GlcNAc...) asparagine) is linked at Asn208. 6 helical membrane-spanning segments follow: residues 239–259 (LCVA…YIVV), 265–285 (GMST…SFFG), 299–319 (FNVM…LWLP), 329–349 (FAAL…VLIV), 364–384 (VLAF…AIAA), and 391–411 (TYTC…LAAL).

It belongs to the major facilitator superfamily. Monocarboxylate porter (TC 2.A.1.13) family.

It localises to the membrane. Functionally, MFS-type transporter; part of the gene cluster that mediates the biosynthesis of oxopyrrolidines, polyketide-amino acid hybrid compounds with feature structures of tetramic acid. The sequence is that of MFS-type transporter opdF from Penicillium oxalicum (strain 114-2 / CGMCC 5302) (Penicillium decumbens).